A 72-amino-acid chain; its full sequence is DNA-directed RNA polymerase subunit omega (72 aa).

It belongs to the RNA polymerase subunit omega family. As to quaternary structure, the RNAP catalytic core consists of 2 alpha, 1 beta, 1 beta' and 1 omega subunit. When a sigma factor is associated with the core the holoenzyme is formed, which can initiate transcription.

It catalyses the reaction RNA(n) + a ribonucleoside 5'-triphosphate = RNA(n+1) + diphosphate. Promotes RNA polymerase assembly. Latches the N- and C-terminal regions of the beta' subunit thereby facilitating its interaction with the beta and alpha subunits. The sequence is that of DNA-directed RNA polymerase subunit omega from Clostridium kluyveri (strain NBRC 12016).